Consider the following 330-residue polypeptide: Succinylglutamate desuccinylase (330 aa).

Residues His53, Glu56, and His147 each contribute to the Zn(2+) site. The active site involves Glu210.

It belongs to the AspA/AstE family. Succinylglutamate desuccinylase subfamily. Zn(2+) serves as cofactor.

It carries out the reaction N-succinyl-L-glutamate + H2O = L-glutamate + succinate. The protein operates within amino-acid degradation; L-arginine degradation via AST pathway; L-glutamate and succinate from L-arginine: step 5/5. Transforms N(2)-succinylglutamate into succinate and glutamate. This is Succinylglutamate desuccinylase from Yersinia pseudotuberculosis serotype O:3 (strain YPIII).